A 192-amino-acid polypeptide reads, in one-letter code: A-type ATP synthase subunit E (192 aa).

It belongs to the V-ATPase E subunit family. As to quaternary structure, has multiple subunits with at least A(3), B(3), C, D, E, F, H, I and proteolipid K(x).

It is found in the cell membrane. Its function is as follows. Component of the A-type ATP synthase that produces ATP from ADP in the presence of a proton gradient across the membrane. The polypeptide is A-type ATP synthase subunit E (Sulfolobus acidocaldarius (strain ATCC 33909 / DSM 639 / JCM 8929 / NBRC 15157 / NCIMB 11770)).